The chain runs to 401 residues: Argininosuccinate synthase (401 aa).

Residues 10-18 (AYSGGVDTS) and Ala-38 contribute to the ATP site. Residue Tyr-89 coordinates L-citrulline. Gly-119 is an ATP binding site. Residues Thr-121, Asn-125, and Asp-126 each contribute to the L-aspartate site. Asn-125 is a binding site for L-citrulline. 5 residues coordinate L-citrulline: Arg-129, Ser-177, Ser-186, Glu-262, and Tyr-274.

It belongs to the argininosuccinate synthase family. Type 1 subfamily. Homotetramer.

The protein localises to the cytoplasm. The catalysed reaction is L-citrulline + L-aspartate + ATP = 2-(N(omega)-L-arginino)succinate + AMP + diphosphate + H(+). Its pathway is amino-acid biosynthesis; L-arginine biosynthesis; L-arginine from L-ornithine and carbamoyl phosphate: step 2/3. This Microcystis aeruginosa (strain NIES-843 / IAM M-2473) protein is Argininosuccinate synthase.